The primary structure comprises 296 residues: Nucleotide-binding protein spyM18_0713 (296 aa).

Residue 13-20 participates in ATP binding; it reads GMSGAGKT. Position 63–66 (63–66) interacts with GTP; the sequence is DMRS.

Belongs to the RapZ-like family.

Displays ATPase and GTPase activities. This chain is Nucleotide-binding protein spyM18_0713, found in Streptococcus pyogenes serotype M18 (strain MGAS8232).